The sequence spans 307 residues: Aspartate carbamoyltransferase catalytic subunit (307 aa).

Carbamoyl phosphate is bound by residues Arg-59 and Thr-60. Lys-87 contacts L-aspartate. Positions 109, 137, and 140 each coordinate carbamoyl phosphate. Arg-170 and Arg-224 together coordinate L-aspartate. Carbamoyl phosphate contacts are provided by Gly-265 and Pro-266.

It belongs to the aspartate/ornithine carbamoyltransferase superfamily. ATCase family. In terms of assembly, heterododecamer (2C3:3R2) of six catalytic PyrB chains organized as two trimers (C3), and six regulatory PyrI chains organized as three dimers (R2).

The enzyme catalyses carbamoyl phosphate + L-aspartate = N-carbamoyl-L-aspartate + phosphate + H(+). The protein operates within pyrimidine metabolism; UMP biosynthesis via de novo pathway; (S)-dihydroorotate from bicarbonate: step 2/3. Its function is as follows. Catalyzes the condensation of carbamoyl phosphate and aspartate to form carbamoyl aspartate and inorganic phosphate, the committed step in the de novo pyrimidine nucleotide biosynthesis pathway. The chain is Aspartate carbamoyltransferase catalytic subunit from Cytophaga hutchinsonii (strain ATCC 33406 / DSM 1761 / CIP 103989 / NBRC 15051 / NCIMB 9469 / D465).